A 560-amino-acid chain; its full sequence is Membrane protein insertase YidC (560 aa).

A run of 6 helical transmembrane segments spans residues 5 to 25, 334 to 354, 357 to 377, 431 to 451, 476 to 496, and 522 to 542; these read IINL…WQYF, AIDF…MNFF, YVGN…LLMF, LPIL…YVTI, LFGL…WPIL, and FMPL…LIYW.

It belongs to the OXA1/ALB3/YidC family. Type 1 subfamily. As to quaternary structure, interacts with the Sec translocase complex via SecD. Specifically interacts with transmembrane segments of nascent integral membrane proteins during membrane integration.

The protein resides in the cell inner membrane. In terms of biological role, required for the insertion and/or proper folding and/or complex formation of integral membrane proteins into the membrane. Involved in integration of membrane proteins that insert both dependently and independently of the Sec translocase complex, as well as at least some lipoproteins. Aids folding of multispanning membrane proteins. The protein is Membrane protein insertase YidC of Rickettsia rickettsii (strain Iowa).